A 353-amino-acid polypeptide reads, in one-letter code: MNAKIVVLPGDGIGPEVTAEAVRVLEAVARRGGHALSFTERLMGGCSIDAHGTALTPEVLADCQAADAVLLGAVGGPKWDDPRAKVRPEQGLLGLRKGLGVFANLRPVRVHPSLLDSSPLRPEKLRGVDIMVIRELTGGLYFGQPKGRDVKDGHARAVDTLEYQDFEVRRVVELAFRIAKGRKKKVTSVDKANVLESSRLWRELATAIGQANPDVALDHMLVDTAAMRLVTSPATLDVVVTENMFGDILTDEASVLAGSMGMLPSASIGEQGPGLYEPIHGSAPDIAGKGIANPVGTVLSAALLLRHSLGLEPEAAAIERAVDQTITDGCRTADLGGKLSTRAMADEILKRLA.

Residue 76–89 (GPKWDDPRAKVRPE) participates in NAD(+) binding. Substrate contacts are provided by arginine 96, arginine 106, arginine 134, and aspartate 223. The Mg(2+) site is built by aspartate 223, aspartate 247, and aspartate 251. 281-293 (GSAPDIAGKGIAN) is an NAD(+) binding site.

This sequence belongs to the isocitrate and isopropylmalate dehydrogenases family. LeuB type 1 subfamily. As to quaternary structure, homodimer. Requires Mg(2+) as cofactor. Mn(2+) serves as cofactor.

The protein localises to the cytoplasm. The catalysed reaction is (2R,3S)-3-isopropylmalate + NAD(+) = 4-methyl-2-oxopentanoate + CO2 + NADH. It functions in the pathway amino-acid biosynthesis; L-leucine biosynthesis; L-leucine from 3-methyl-2-oxobutanoate: step 3/4. Catalyzes the oxidation of 3-carboxy-2-hydroxy-4-methylpentanoate (3-isopropylmalate) to 3-carboxy-4-methyl-2-oxopentanoate. The product decarboxylates to 4-methyl-2 oxopentanoate. In Anaeromyxobacter dehalogenans (strain 2CP-C), this protein is 3-isopropylmalate dehydrogenase.